We begin with the raw amino-acid sequence, 400 residues long: Acetylornithine aminotransferase (400 aa).

Residues 102 to 103 and Phe-135 each bind pyridoxal 5'-phosphate; that span reads GA. Arg-138 contributes to the N(2)-acetyl-L-ornithine binding site. 220-223 lines the pyridoxal 5'-phosphate pocket; the sequence is DEVQ. Lys-249 carries the post-translational modification N6-(pyridoxal phosphate)lysine. Ser-276 serves as a coordination point for N(2)-acetyl-L-ornithine. Thr-277 lines the pyridoxal 5'-phosphate pocket.

It belongs to the class-III pyridoxal-phosphate-dependent aminotransferase family. ArgD subfamily. As to quaternary structure, homodimer. Pyridoxal 5'-phosphate is required as a cofactor.

It localises to the cytoplasm. It catalyses the reaction N(2)-acetyl-L-ornithine + 2-oxoglutarate = N-acetyl-L-glutamate 5-semialdehyde + L-glutamate. It functions in the pathway amino-acid biosynthesis; L-arginine biosynthesis; N(2)-acetyl-L-ornithine from L-glutamate: step 4/4. In Gloeobacter violaceus (strain ATCC 29082 / PCC 7421), this protein is Acetylornithine aminotransferase.